The following is a 546-amino-acid chain: Chaperonin GroEL (546 aa).

ATP contacts are provided by residues 29–32 (TMGP), K50, 86–90 (DGTTT), G414, and D492.

Belongs to the chaperonin (HSP60) family. In terms of assembly, forms a cylinder of 14 subunits composed of two heptameric rings stacked back-to-back. Interacts with the co-chaperonin GroES.

It localises to the cytoplasm. It catalyses the reaction ATP + H2O + a folded polypeptide = ADP + phosphate + an unfolded polypeptide.. In terms of biological role, together with its co-chaperonin GroES, plays an essential role in assisting protein folding. The GroEL-GroES system forms a nano-cage that allows encapsulation of the non-native substrate proteins and provides a physical environment optimized to promote and accelerate protein folding. This Helicobacter acinonychis (strain Sheeba) protein is Chaperonin GroEL.